We begin with the raw amino-acid sequence, 89 residues long: Small ribosomal subunit protein uS15 (89 aa).

This sequence belongs to the universal ribosomal protein uS15 family. Part of the 30S ribosomal subunit. Forms a bridge to the 50S subunit in the 70S ribosome, contacting the 23S rRNA.

In terms of biological role, one of the primary rRNA binding proteins, it binds directly to 16S rRNA where it helps nucleate assembly of the platform of the 30S subunit by binding and bridging several RNA helices of the 16S rRNA. Forms an intersubunit bridge (bridge B4) with the 23S rRNA of the 50S subunit in the ribosome. The protein is Small ribosomal subunit protein uS15 of Lactiplantibacillus plantarum (strain ATCC BAA-793 / NCIMB 8826 / WCFS1) (Lactobacillus plantarum).